A 145-amino-acid chain; its full sequence is Large ribosomal subunit protein uL15 (145 aa).

A disordered region spans residues 1–57 (MKLNDLSPAPGSRREKHRPGRGIGSGLGKTGGRGHKGQTSRSGGTIAPGFEGGQQPL). Residues 21–31 (RGIGSGLGKTG) are compositionally biased toward gly residues.

Belongs to the universal ribosomal protein uL15 family. Part of the 50S ribosomal subunit.

Its function is as follows. Binds to the 23S rRNA. In Pseudomonas fluorescens (strain Pf0-1), this protein is Large ribosomal subunit protein uL15.